Consider the following 348-residue polypeptide: Flagellar P-ring protein (348 aa).

The N-terminal stretch at 1–16 (MRVLTIFLLFMTSIFA) is a signal peptide.

It belongs to the FlgI family. The basal body constitutes a major portion of the flagellar organelle and consists of four rings (L,P,S, and M) mounted on a central rod.

The protein localises to the periplasm. It is found in the bacterial flagellum basal body. Assembles around the rod to form the L-ring and probably protects the motor/basal body from shearing forces during rotation. This Campylobacter jejuni subsp. jejuni serotype O:23/36 (strain 81-176) protein is Flagellar P-ring protein.